The following is a 115-amino-acid chain: Small ribosomal subunit protein uS13 (115 aa).

Residues R92–K115 form a disordered region. Residues A106–K115 are compositionally biased toward basic residues.

Belongs to the universal ribosomal protein uS13 family. As to quaternary structure, part of the 30S ribosomal subunit. Forms a loose heterodimer with protein S19. Forms two bridges to the 50S subunit in the 70S ribosome.

Located at the top of the head of the 30S subunit, it contacts several helices of the 16S rRNA. In the 70S ribosome it contacts the 23S rRNA (bridge B1a) and protein L5 of the 50S subunit (bridge B1b), connecting the 2 subunits; these bridges are implicated in subunit movement. Contacts the tRNAs in the A and P-sites. This chain is Small ribosomal subunit protein uS13, found in Lactobacillus gasseri (strain ATCC 33323 / DSM 20243 / BCRC 14619 / CIP 102991 / JCM 1131 / KCTC 3163 / NCIMB 11718 / NCTC 13722 / AM63).